A 146-amino-acid chain; its full sequence is MGRVRTKTVKKSAKVIIERYYPKLTLDFETNKRICDEIAIIASKRLRNKIAGYTTHLMKRIQRGPVRGISFKLQEEERERKDQYVPEVSALDFTQNSESGQLDVDTETKDLLKHLGFDSIPVNVIPVTQAQPVERGRRFGDRPRRD.

It belongs to the eukaryotic ribosomal protein eS17 family. Component of the small ribosomal subunit (SSU). Mature N.crassa ribosomes consist of a small (40S) and a large (60S) subunit. The 40S small subunit contains 1 molecule of ribosomal RNA (18S rRNA) and at least 32 different proteins. The large 60S subunit contains 3 rRNA molecules (26S, 5.8S and 5S rRNA) and at least 42 different proteins.

It localises to the cytoplasm. Its function is as follows. Component of the ribosome, a large ribonucleoprotein complex responsible for the synthesis of proteins in the cell. The small ribosomal subunit (SSU) binds messenger RNAs (mRNAs) and translates the encoded message by selecting cognate aminoacyl-transfer RNA (tRNA) molecules. The large subunit (LSU) contains the ribosomal catalytic site termed the peptidyl transferase center (PTC), which catalyzes the formation of peptide bonds, thereby polymerizing the amino acids delivered by tRNAs into a polypeptide chain. The nascent polypeptides leave the ribosome through a tunnel in the LSU and interact with protein factors that function in enzymatic processing, targeting, and the membrane insertion of nascent chains at the exit of the ribosomal tunnel. The protein is Small ribosomal subunit protein eS17 (rps-17) of Neurospora crassa (strain ATCC 24698 / 74-OR23-1A / CBS 708.71 / DSM 1257 / FGSC 987).